A 548-amino-acid chain; its full sequence is Chaperonin GroEL 1 (548 aa).

Residues 30–33, Lys51, 87–91, Gly415, 479–481, and Asp495 contribute to the ATP site; these read TLGP, DGTTT, and NAA.

The protein belongs to the chaperonin (HSP60) family. In terms of assembly, forms a cylinder of 14 subunits composed of two heptameric rings stacked back-to-back. Interacts with the co-chaperonin GroES.

The protein localises to the cytoplasm. It carries out the reaction ATP + H2O + a folded polypeptide = ADP + phosphate + an unfolded polypeptide.. Together with its co-chaperonin GroES, plays an essential role in assisting protein folding. The GroEL-GroES system forms a nano-cage that allows encapsulation of the non-native substrate proteins and provides a physical environment optimized to promote and accelerate protein folding. This chain is Chaperonin GroEL 1, found in Vibrio harveyi (Beneckea harveyi).